The sequence spans 528 residues: Keratin, type II cytoskeletal 78 (528 aa).

The tract at residues 1-104 is head; it reads MSLSPCRARR…DPQFQVVRTQ (104 aa). Residues 23–45 are disordered; that stretch reads VGRGRTGFSSRSLSSFGGCRGGS. Positions 24–39 are enriched in low complexity; sequence GRGRTGFSSRSLSSFG. Residues 105–140 are coil 1A; that stretch reads ETQQIRVLNNQFASFIDKVRFLEQQNKVLETKWHLL. The IF rod domain occupies 105–418; it reads ETQQIRVLNN…RLLEGEECRM (314 aa). The tract at residues 141–159 is linker 1; sequence QQQGLSDRPQGLESFFEAY. Residues 160–252 are coil 1B; that stretch reads LVRLRTQLEE…LYEEELGQLQ (93 aa). Residues 253-275 form a linker 12 region; that stretch reads TQASDMSVVLSMDNNRCLDFRDL. The coil 2 stretch occupies residues 276–415; that stretch reads IAEVRARYEE…TYRRLLEGEE (140 aa). A tail region spans residues 416-528; the sequence is CRMSGECASQ…ESSLKTSVTY (113 aa).

Belongs to the intermediate filament family. Heterotetramer of two type I and two type II keratins.

This is Keratin, type II cytoskeletal 78 (KRT78) from Bos taurus (Bovine).